Reading from the N-terminus, the 271-residue chain is Membrane protein insertase YidC 1 (271 aa).

A signal peptide spans 1 to 20; it reads MKKKLKTFSLILLTGSLLVA. A lipid anchor (N-palmitoyl cysteine) is attached at Cys-21. Cys-21 is lipidated: S-diacylglycerol cysteine. The next 4 membrane-spanning stretches (helical) occupy residues 45–65, 124–144, 163–183, and 201–221; these read IQWLSFNHSIGLGIILFTLII, YASVLPLLIQLPVLWALFQAL, PDPYYILPVLAALFTFLSTWL, and VMPFIILVTSFNFASGVVLYW.

It belongs to the OXA1/ALB3/YidC family. Type 2 subfamily.

It localises to the cell membrane. Required for the insertion and/or proper folding and/or complex formation of integral membrane proteins into the membrane. Involved in integration of membrane proteins that insert both dependently and independently of the Sec translocase complex, as well as at least some lipoproteins. The sequence is that of Membrane protein insertase YidC 1 from Streptococcus agalactiae serotype III (strain NEM316).